We begin with the raw amino-acid sequence, 139 residues long: Invertebrate-type lysozyme 2 (139 aa).

The N-terminal stretch at 1 to 18 is a signal peptide; that stretch reads MFVKAILLLSIAVAYASA. The I-type lysozyme domain maps to 19–138; sequence DCLHCICMRE…WKGVHSCCGC (120 aa). 7 disulfide bridges follow: cysteine 20-cysteine 106, cysteine 23-cysteine 138, cysteine 25-cysteine 31, cysteine 36-cysteine 45, cysteine 58-cysteine 86, cysteine 76-cysteine 82, and cysteine 98-cysteine 120. Catalysis depends on glutamate 28, which acts as the Proton donor. Aspartate 39 acts as the Nucleophile in catalysis. 51-57 serves as a coordination point for substrate; it reads KIPYYED. Substrate is bound by residues tyrosine 90 and 113–115; that span reads HNG.

This sequence belongs to the glycosyl hydrolase 22 family. Type-I lysozyme subfamily. Expressed in pharyngeal muscle cell pm3, nerve ring and intestine.

The catalysed reaction is Hydrolysis of (1-&gt;4)-beta-linkages between N-acetylmuramic acid and N-acetyl-D-glucosamine residues in a peptidoglycan and between N-acetyl-D-glucosamine residues in chitodextrins.. Its function is as follows. Has bacteriolytic activity against Gram-positive bacteria. May play a role in resistance to Gram-positive bacterium S.aureus infection. The sequence is that of Invertebrate-type lysozyme 2 from Caenorhabditis elegans.